The chain runs to 720 residues: Asp/Glu-specific dipeptidyl-peptidase (720 aa).

The N-terminal stretch at 1-21 is a signal peptide; that stretch reads MKKRLLLPLFAALCLSQIAHA. Cysteines 69 and 86 form a disulfide. Catalysis depends on charge relay system residues H85, D227, and S655.

This sequence belongs to the peptidase S46 family. In terms of assembly, homodimer.

It localises to the cell surface. Enzyme activity is completely blocked by diisopropyl-fluorophosphates, moderately by phenylmethylsulfonyl fluoride (PMSF) and 4-(2-methyl)benzenesulfonyl fluoride, and slightly by pepstatin in vitro. Catalyzes the removal of dipeptides from the N-terminus of oligopeptides. Shows a strict specificity for acidic residues (Asp or Glu) in the P1 position, and has a hydrophobic residue preference at the P2 position. Preferentially cleaves the synthetic substrate Leu-Asp-methylcoumaryl-7-amide (Leu-Asp-MCA) as compared to Leu-Glu-MCA. Is involved in amino acid metabolism and bacterial growth of asaccharolytic P.gingivalis, that utilizes amino acids from extracellular proteinaceous nutrients as energy and carbon sources. The polypeptide is Asp/Glu-specific dipeptidyl-peptidase (Porphyromonas gingivalis (strain ATCC 33277 / DSM 20709 / CIP 103683 / JCM 12257 / NCTC 11834 / 2561)).